We begin with the raw amino-acid sequence, 284 residues long: Ribosomal RNA small subunit methyltransferase A (284 aa).

S-adenosyl-L-methionine-binding residues include His12, Leu14, Gly47, Glu68, Asp93, and Asn118.

Belongs to the class I-like SAM-binding methyltransferase superfamily. rRNA adenine N(6)-methyltransferase family. RsmA subfamily.

It is found in the cytoplasm. The enzyme catalyses adenosine(1518)/adenosine(1519) in 16S rRNA + 4 S-adenosyl-L-methionine = N(6)-dimethyladenosine(1518)/N(6)-dimethyladenosine(1519) in 16S rRNA + 4 S-adenosyl-L-homocysteine + 4 H(+). In terms of biological role, specifically dimethylates two adjacent adenosines (A1518 and A1519) in the loop of a conserved hairpin near the 3'-end of 16S rRNA in the 30S particle. May play a critical role in biogenesis of 30S subunits. The chain is Ribosomal RNA small subunit methyltransferase A from Synechocystis sp. (strain ATCC 27184 / PCC 6803 / Kazusa).